Consider the following 302-residue polypeptide: tRNA dimethylallyltransferase (302 aa).

21-28 (GPTASGKS) lines the ATP pocket. 23 to 28 (TASGKS) contacts substrate.

Belongs to the IPP transferase family. In terms of assembly, monomer. Mg(2+) serves as cofactor.

It carries out the reaction adenosine(37) in tRNA + dimethylallyl diphosphate = N(6)-dimethylallyladenosine(37) in tRNA + diphosphate. Its function is as follows. Catalyzes the transfer of a dimethylallyl group onto the adenine at position 37 in tRNAs that read codons beginning with uridine, leading to the formation of N6-(dimethylallyl)adenosine (i(6)A). The polypeptide is tRNA dimethylallyltransferase (Paracoccus denitrificans (strain Pd 1222)).